The primary structure comprises 298 residues: Glycine--tRNA ligase alpha subunit (298 aa).

This sequence belongs to the class-II aminoacyl-tRNA synthetase family. As to quaternary structure, tetramer of two alpha and two beta subunits.

Its subcellular location is the cytoplasm. It catalyses the reaction tRNA(Gly) + glycine + ATP = glycyl-tRNA(Gly) + AMP + diphosphate. The chain is Glycine--tRNA ligase alpha subunit from Helicobacter pylori (strain HPAG1).